A 263-amino-acid polypeptide reads, in one-letter code: uncharacterized protein (263 aa).

The stretch at 53 to 89 (SAVTASKFSPDGRWLVNLTDQGYVQLWDVHKGERVKT) is one WD repeat.

This is an uncharacterized protein from Deinococcus radiodurans (strain ATCC 13939 / DSM 20539 / JCM 16871 / CCUG 27074 / LMG 4051 / NBRC 15346 / NCIMB 9279 / VKM B-1422 / R1).